Consider the following 738-residue polypeptide: Phosphoribosylformylglycinamidine synthase subunit PurL (738 aa).

Histidine 53 is a catalytic residue. Positions 56 and 95 each coordinate ATP. Glutamate 97 is a binding site for Mg(2+). Residues 98-101 (SHNH) and arginine 120 each bind substrate. Histidine 99 (proton acceptor) is an active-site residue. Aspartate 121 lines the Mg(2+) pocket. Residue glutamine 244 participates in substrate binding. Aspartate 274 lines the Mg(2+) pocket. 318-320 (ESQ) is a substrate binding site. Positions 499 and 536 each coordinate ATP. A Mg(2+)-binding site is contributed by asparagine 537. A substrate-binding site is contributed by serine 539.

This sequence belongs to the FGAMS family. Monomer. Part of the FGAM synthase complex composed of 1 PurL, 1 PurQ and 2 PurS subunits.

It localises to the cytoplasm. It carries out the reaction N(2)-formyl-N(1)-(5-phospho-beta-D-ribosyl)glycinamide + L-glutamine + ATP + H2O = 2-formamido-N(1)-(5-O-phospho-beta-D-ribosyl)acetamidine + L-glutamate + ADP + phosphate + H(+). It functions in the pathway purine metabolism; IMP biosynthesis via de novo pathway; 5-amino-1-(5-phospho-D-ribosyl)imidazole from N(2)-formyl-N(1)-(5-phospho-D-ribosyl)glycinamide: step 1/2. Part of the phosphoribosylformylglycinamidine synthase complex involved in the purines biosynthetic pathway. Catalyzes the ATP-dependent conversion of formylglycinamide ribonucleotide (FGAR) and glutamine to yield formylglycinamidine ribonucleotide (FGAM) and glutamate. The FGAM synthase complex is composed of three subunits. PurQ produces an ammonia molecule by converting glutamine to glutamate. PurL transfers the ammonia molecule to FGAR to form FGAM in an ATP-dependent manner. PurS interacts with PurQ and PurL and is thought to assist in the transfer of the ammonia molecule from PurQ to PurL. The polypeptide is Phosphoribosylformylglycinamidine synthase subunit PurL (Leuconostoc mesenteroides subsp. mesenteroides (strain ATCC 8293 / DSM 20343 / BCRC 11652 / CCM 1803 / JCM 6124 / NCDO 523 / NBRC 100496 / NCIMB 8023 / NCTC 12954 / NRRL B-1118 / 37Y)).